Reading from the N-terminus, the 91-residue chain is Small ribosomal subunit protein uS19 (91 aa).

Belongs to the universal ribosomal protein uS19 family.

In terms of biological role, protein S19 forms a complex with S13 that binds strongly to the 16S ribosomal RNA. This chain is Small ribosomal subunit protein uS19, found in Pseudomonas paraeruginosa (strain DSM 24068 / PA7) (Pseudomonas aeruginosa (strain PA7)).